A 784-amino-acid chain; its full sequence is LPS-assembly protein LptD (784 aa).

The first 24 residues, 1 to 24 (MKKRIPTLLATMIATALYSQQGLA), serve as a signal peptide directing secretion. Cystine bridges form between cysteine 31/cysteine 724 and cysteine 173/cysteine 725.

The protein belongs to the LptD family. Component of the lipopolysaccharide transport and assembly complex. Interacts with LptE and LptA. Post-translationally, contains two intramolecular disulfide bonds.

It is found in the cell outer membrane. In terms of biological role, together with LptE, is involved in the assembly of lipopolysaccharide (LPS) at the surface of the outer membrane. This Shigella dysenteriae serotype 1 (strain Sd197) protein is LPS-assembly protein LptD.